Reading from the N-terminus, the 1005-residue chain is PDZ domain-containing protein 7 (1005 aa).

PDZ domains lie at 86–168 (SVRV…RMGR) and 210–293 (IVHL…ETGR). 3 disordered regions span residues 353 to 378 (PEEPGSRGPGWGRADTAMQTEPDAGG), 700 to 859 (VSPS…KTPS), and 949 to 1005 (VRVP…ARLL). Basic residues predominate over residues 770–786 (AQSRSRSRSRSRSRSRS). Residues 787-799 (SRGQGKSPGRRSP) show a composition bias toward low complexity. Residues 989 to 998 (PEPPTNPQTP) are compositionally biased toward pro residues.

As to quaternary structure, homodimerizes (via PDZ2 domain). Component of USH2 complex, composed of ADGRV1, PDZD7, USH2A and WHRN. Interacts (via PDZ domains) with WHRN; the interaction is direct. Interacts with USH1G. Interacts with ADGRV1 (via the cytoplasmic region). Interacts with USH2A (via the cytoplasmic region). Interacts with MYO7A (via MyTH4-FERM domains).

The protein resides in the cell projection. The protein localises to the cilium. Its subcellular location is the nucleus. It localises to the stereocilium. Its function is as follows. In cochlear developing hair cells, essential in organizing the USH2 complex at stereocilia ankle links. Blocks inhibition of adenylate cyclase activity mediated by ADGRV1. This is PDZ domain-containing protein 7 (PDZD7) from Pongo abelii (Sumatran orangutan).